A 274-amino-acid chain; its full sequence is Shikimate dehydrogenase (NADP(+)) (274 aa).

Shikimate contacts are provided by residues 14–16 and threonine 61; that span reads SKS. Lysine 65 functions as the Proton acceptor in the catalytic mechanism. The shikimate site is built by asparagine 86 and aspartate 102. NADP(+)-binding positions include 126-130, 150-155, and methionine 214; these read GAGGA and NRTAEK. Tyrosine 216 contacts shikimate. NADP(+) is bound at residue glycine 239.

The protein belongs to the shikimate dehydrogenase family. In terms of assembly, homodimer.

It carries out the reaction shikimate + NADP(+) = 3-dehydroshikimate + NADPH + H(+). Its pathway is metabolic intermediate biosynthesis; chorismate biosynthesis; chorismate from D-erythrose 4-phosphate and phosphoenolpyruvate: step 4/7. Involved in the biosynthesis of the chorismate, which leads to the biosynthesis of aromatic amino acids. Catalyzes the reversible NADPH linked reduction of 3-dehydroshikimate (DHSA) to yield shikimate (SA). The sequence is that of Shikimate dehydrogenase (NADP(+)) from Pseudoalteromonas translucida (strain TAC 125).